The following is a 113-amino-acid chain: U11-theraphotoxin-Hhn1p (113 aa).

An N-terminal signal peptide occupies residues 1–21 (MNTVRVTFLLVFVLAVSLGQA). Positions 22-74 (DKDENRMEMQEKTEQGKSYLDFAENLLLQKLEELEAKLLEEDSEESRNSRQKR) are excised as a propeptide. The disordered stretch occupies residues 61 to 83 (EEDSEESRNSRQKRCIGEGVPCD). 3 cysteine pairs are disulfide-bonded: Cys-75/Cys-90, Cys-82/Cys-95, and Cys-89/Cys-110.

Belongs to the neurotoxin 14 (magi-1) family. 01 (HNTX-16) subfamily. In terms of tissue distribution, expressed by the venom gland.

The protein resides in the secreted. Probable ion channel inhibitor. The polypeptide is U11-theraphotoxin-Hhn1p (Cyriopagopus hainanus (Chinese bird spider)).